A 60-amino-acid polypeptide reads, in one-letter code: Conotoxin Cl1.1 (60 aa).

A signal peptide spans 1–19 (MRCLPVIVILLLLISSAAA). A propeptide spanning residues 20–48 (VVEGPLRVNRRLRPRKAPVDMQARDWNWG) is cleaved from the precursor.

Belongs to the conotoxin T superfamily. Contains 2 disulfide bonds. As to expression, expressed by the venom duct.

Its subcellular location is the secreted. This is Conotoxin Cl1.1 from Californiconus californicus (California cone).